Consider the following 506-residue polypeptide: Chromodomain Y-like protein 2 (506 aa).

The Chromo domain occupies 7–67 (YEVERIVDKR…LHMSKDKRIK (61 aa)). The segment at 64–177 (KRIKSGKQSS…RHFGNGSHQP (114 aa)) is disordered. Residues 88–98 (KLSHRPSDPGK) show a composition bias toward basic and acidic residues. Over residues 101-120 (GTSHKRKRINPPLAKPKKGY) the composition is skewed to basic residues. A compositionally biased stretch (polar residues) spans 133–143 (KTVSYRTTPSG).

As to quaternary structure, interacts (via chromo domain) with histone H3K9me3. As to expression, ubiquitously expressed.

The protein localises to the nucleus. This Homo sapiens (Human) protein is Chromodomain Y-like protein 2 (CDYL2).